The chain runs to 83 residues: Retinal cone rhodopsin-sensitive cGMP 3',5'-cyclic phosphodiesterase subunit gamma (83 aa).

Over residues 1 to 19 (MSDNTTLAPPAASQAPATP) the composition is skewed to low complexity. The disordered stretch occupies residues 1–51 (MSDNTTLAPPAASQAPATPRKGPPKFKQRQTRQFKSKPPKKGVKGFGDDIP). Residues 22–43 (GPPKFKQRQTRQFKSKPPKKGV) are compositionally biased toward basic residues.

It belongs to the rod/cone cGMP-PDE gamma subunit family. As to quaternary structure, tetramer composed of two catalytic chains (alpha and beta), and two inhibitory chains (gamma).

The catalysed reaction is 3',5'-cyclic GMP + H2O = GMP + H(+). Participates in processes of transmission and amplification of the visual signal. cGMP-PDEs are the effector molecules in G-protein-mediated phototransduction in vertebrate rods and cones. The sequence is that of Retinal cone rhodopsin-sensitive cGMP 3',5'-cyclic phosphodiesterase subunit gamma (PDE6H) from Ictidomys tridecemlineatus (Thirteen-lined ground squirrel).